The primary structure comprises 192 residues: Fe/S biogenesis protein NfuA (192 aa).

Cys149 and Cys152 together coordinate [4Fe-4S] cluster.

Belongs to the NfuA family. In terms of assembly, homodimer. The cofactor is [4Fe-4S] cluster.

Involved in iron-sulfur cluster biogenesis. Binds a 4Fe-4S cluster, can transfer this cluster to apoproteins, and thereby intervenes in the maturation of Fe/S proteins. Could also act as a scaffold/chaperone for damaged Fe/S proteins. The polypeptide is Fe/S biogenesis protein NfuA (Pseudoalteromonas atlantica (strain T6c / ATCC BAA-1087)).